Consider the following 277-residue polypeptide: L-aspartate oxidase (277 aa).

Arg-23 (proton donor/acceptor) is an active-site residue. Residues Glu-106 and 122-123 contribute to the FAD site; that span reads SL. Disordered regions lie at residues 142 to 161 and 234 to 277; these read LRRG…PPPA and DYPA…ETRS. Positions 146–161 are enriched in pro residues; sequence WPPPAPPDLSPRPPPA.

Belongs to the FAD-dependent oxidoreductase 2 family. NadB subfamily. FAD serves as cofactor.

The protein resides in the cytoplasm. The catalysed reaction is L-aspartate + O2 = iminosuccinate + H2O2. It participates in cofactor biosynthesis; NAD(+) biosynthesis; iminoaspartate from L-aspartate (oxidase route): step 1/1. Its function is as follows. Catalyzes the oxidation of L-aspartate to iminoaspartate, the first step in the de novo biosynthesis of NAD(+). The protein is L-aspartate oxidase (nadB) of Rhodospirillum rubrum.